Consider the following 207-residue polypeptide: Putative 3-methyladenine DNA glycosylase (207 aa).

Over residues P182–P193 the composition is skewed to low complexity. Residues P182 to P207 form a disordered region. The span at R198–P207 shows a compositional bias: basic residues.

Belongs to the DNA glycosylase MPG family.

The polypeptide is Putative 3-methyladenine DNA glycosylase (Anaeromyxobacter dehalogenans (strain 2CP-C)).